The primary structure comprises 413 residues: Serine hydroxymethyltransferase (413 aa).

(6S)-5,6,7,8-tetrahydrofolate contacts are provided by residues leucine 117 and 121–123; that span reads GHL. Position 226 is an N6-(pyridoxal phosphate)lysine (lysine 226). Position 349 to 351 (349 to 351) interacts with (6S)-5,6,7,8-tetrahydrofolate; sequence SPF.

This sequence belongs to the SHMT family. As to quaternary structure, homodimer. The cofactor is pyridoxal 5'-phosphate.

Its subcellular location is the cytoplasm. The enzyme catalyses (6R)-5,10-methylene-5,6,7,8-tetrahydrofolate + glycine + H2O = (6S)-5,6,7,8-tetrahydrofolate + L-serine. It functions in the pathway one-carbon metabolism; tetrahydrofolate interconversion. Its pathway is amino-acid biosynthesis; glycine biosynthesis; glycine from L-serine: step 1/1. Functionally, catalyzes the reversible interconversion of serine and glycine with tetrahydrofolate (THF) serving as the one-carbon carrier. This reaction serves as the major source of one-carbon groups required for the biosynthesis of purines, thymidylate, methionine, and other important biomolecules. Also exhibits THF-independent aldolase activity toward beta-hydroxyamino acids, producing glycine and aldehydes, via a retro-aldol mechanism. The protein is Serine hydroxymethyltransferase of Listeria monocytogenes serotype 4b (strain F2365).